A 20-amino-acid polypeptide reads, in one-letter code: Hemocyanin subunit II (20 aa).

Residues 1–20 (DVVASSTAHKQQDINHLLDK) are disordered. Residues 10–20 (KQQDINHLLDK) show a composition bias toward basic and acidic residues.

It belongs to the tyrosinase family. Hemocyanin subfamily. In terms of assembly, composed of 3 major subunits (IB, II and III) and 1 minor subunit (IA) which form homohexamers and heterohexamers. May also form larger structures. As to expression, hemolymph.

It localises to the secreted. The protein localises to the extracellular space. Functionally, hemocyanins are copper-containing oxygen carriers occurring freely dissolved in the hemolymph of many mollusks and arthropods. The sequence is that of Hemocyanin subunit II from Panulirus japonicus (Japanese spiny lobster).